The primary structure comprises 1908 residues: Putative ankyrin repeat protein L484 (1908 aa).

ANK repeat units follow at residues 20–50 (DIMEQFFLTIKTGDIDKIRNFVAQNKNKFNI), 60–97 (PNKTPIHAVLELDDRIADQETKLTIIKYLDKMGAPMDL), 101–130 (DNVWPIHLAAADQDEDIIDYMLKNKVSIDR), 134–167 (SNNTPLHYAVYGKQVPCFDKVKVGSIVPPQDIDK), and 1370–1399 (DGNTPLHLAISMTNPDIVEILLKHGANPFT). Positions 1539–1603 (VQLLNPKLRD…QTNISDLEFK (65 aa)) form a coiled coil.

Its subcellular location is the virion. This chain is Putative ankyrin repeat protein L484, found in Acanthamoeba polyphaga mimivirus (APMV).